The chain runs to 501 residues: MEALLQLKGIDKAFPGVKALSGAALNVYPGRVIALVGENGAGKSTMMKVLTGIYTRDAGTLLWLGKETTFTGPKSSQEAGIGIIHQELNLIPQLTIAENIFLGREFVNRFGKIDWKTMYAEADKLLAKLNLCFKSDKLVGDLSIGDQQMVEIAKVLSFESKVIIMDEPTDALTDTETESLFRVIRELKSQGRGIVYISHRMKEIFEICDDVTVFRDGQFIAEREVASLTEDSLIEMMVGRKLEDQYPHLDKAPGDIRLKVDNLCGPGVNDVSFTLRKGEILGVSGLMGAGRTELMKVLYGAQPRTSGYVTLDGHEVVTRSPQDGLANGIVYISEDRKRDGLVLGMSVKENMSLTALRYFSRAGGSLKHADEQQAVSDFIRLFNVKTPSMEQAIGLLSGGNQQKVAIARGLMTRPKVLILDEPTRGVDVGAKKEIYQLINQFKADGLSIILVSSEMPEVLGMSDRIIVMHEGHLSGEFTREQATQEVLMAAAVGKLNRVNQE.

2 consecutive ABC transporter domains span residues 5–241 and 252–495; these read LQLK…VGRK and APGD…VGKL. 37 to 44 is a binding site for ATP; the sequence is GENGAGKS.

This sequence belongs to the ABC transporter superfamily. Ribose importer (TC 3.A.1.2.1) family. As to quaternary structure, the complex is composed of an ATP-binding protein (RbsA), two transmembrane proteins (RbsC) and a solute-binding protein (RbsB).

Its subcellular location is the cell inner membrane. The enzyme catalyses D-ribose(out) + ATP + H2O = D-ribose(in) + ADP + phosphate + H(+). Its function is as follows. Part of the ABC transporter complex RbsABC involved in ribose import. Responsible for energy coupling to the transport system. In Shigella sonnei (strain Ss046), this protein is Ribose import ATP-binding protein RbsA.